We begin with the raw amino-acid sequence, 321 residues long: Olfactory receptor 5P60 (321 aa).

The Extracellular portion of the chain corresponds to 1-28 (MAFLHNGNHTAVTEFILLGLTDDPVLRI). An N-linked (GlcNAc...) asparagine glycan is attached at Asn8. A helical membrane pass occupies residues 29–49 (VLFTIILCIYLVTVSGNLSTI). The Cytoplasmic portion of the chain corresponds to 50–57 (LLIRVSSQ). Residues 58-78 (LHHPMYFFLSHLASADIGYSS) traverse the membrane as a helical segment. At 79 to 102 (SVTPNMLVNFLVKQNTISYIGCSI) the chain is on the extracellular side. A disulfide bridge connects residues Cys100 and Cys192. The chain crosses the membrane as a helical span at residues 103–123 (QFGSAAFFGGLECFLLAVMAY). Residues 124–136 (DRFVAICNPLLYS) lie on the Cytoplasmic side of the membrane. Residues 137 to 157 (TKMSTQVCVQLVVGSYIGGFL) form a helical membrane-spanning segment. Residues 158–199 (NASFATVSFLFLFFCGPNIINHFFCDFAPLIELSCSDVRISV) lie on the Extracellular side of the membrane. The helical transmembrane segment at 200-220 (LVTSFSAGTVTMLTVLVIAIS) threads the bilayer. Residues 221–240 (YTYILITILKMRSTEGRHKA) are Cytoplasmic-facing. A helical transmembrane segment spans residues 241 to 261 (FSTCTSHLTAVSLFYGTITFI). The Extracellular segment spans residues 262 to 274 (YVMPKSRYSTDQN). A helical membrane pass occupies residues 275–295 (KVVSVFYMVVIPMLNPLIYSL). Residues 296-321 (RNNEIKGALRRHLGKKIFSQSNILFY) lie on the Cytoplasmic side of the membrane.

It belongs to the G-protein coupled receptor 1 family.

The protein localises to the cell membrane. Functionally, potential odorant receptor. The polypeptide is Olfactory receptor 5P60 (Mus musculus (Mouse)).